Reading from the N-terminus, the 334-residue chain is Sterol 4-C-methyltransferase strm-1 (334 aa).

The protein belongs to the class I-like SAM-binding methyltransferase superfamily. Erg6/SMT family. As to expression, expressed in the pharynx and hypodermal syncytium.

It catalyses the reaction 5alpha-cholest-7-en-3-one + S-adenosyl-L-methionine = 4alpha-methyl-5alpha-cholest-7-en-3-one + S-adenosyl-L-homocysteine + H(+). Its pathway is steroid hormone biosynthesis; dafachronic acid biosynthesis. Its function is as follows. Catalyzes the methyl transfer from S-adenosyl-methionine to the C-4 of the A-ring sterols such as lathosterone (5alpha-cholest-7-en-3-one) thereby rendering them unsuitable as ligand precursors. May irreversibly shunt sterols away from hormone dafachronic acid production. Dafachronic acids act as ligands and bind directly to the nuclear hormone receptor (NHR) daf-12 suppressing dauer formation and inducing reproductive growth. By reducing the biosynthesis of dafachronic acids, this methyltransferase can regulate dauer larva formation. The protein is Sterol 4-C-methyltransferase strm-1 (strm-1) of Caenorhabditis elegans.